The sequence spans 56 residues: MTQVTVGENEGIESALRRFKRQVSKAGIFADLKRLRHHETPVEKYKRKLQQRRRRR.

The protein belongs to the bacterial ribosomal protein bS21 family.

This is Small ribosomal subunit protein bS21 from Synechococcus sp. (strain RCC307).